Here is a 155-residue protein sequence, read N- to C-terminus: MKTYSAKPSEIEKKWWVIDAKNIVLGRLASRVANMLRGKHKPSFTPHLDCGDNIIIINAEHVKLTGKKANPKDGKIYYRYTGFPGGIKDTTAGKILSGKHPERVIKMAVKRMITRNALGAKQMSNLYVYANGDHPHMAQQPTVYDFASQNPKNKK.

This sequence belongs to the universal ribosomal protein uL13 family. Part of the 50S ribosomal subunit.

Its function is as follows. This protein is one of the early assembly proteins of the 50S ribosomal subunit, although it is not seen to bind rRNA by itself. It is important during the early stages of 50S assembly. The protein is Large ribosomal subunit protein uL13 of Rickettsia conorii (strain ATCC VR-613 / Malish 7).